The sequence spans 140 residues: Photosystem I reaction center subunit XI (140 aa).

3 helical membrane-spanning segments follow: residues 48–68, 79–99, and 119–139; these read LEIG…LGPL, LLSA…YGAV, and SGFL…LTLF.

This sequence belongs to the PsaL family.

Its subcellular location is the plastid. It localises to the chloroplast thylakoid membrane. This Cyanidioschyzon merolae (strain NIES-3377 / 10D) (Unicellular red alga) protein is Photosystem I reaction center subunit XI.